We begin with the raw amino-acid sequence, 511 residues long: UDP-N-acetylmuramate--L-alanine ligase (511 aa).

127–133 (GTHGKTT) is an ATP binding site. The interval 481-511 (VGTVPGGEVGGATTIGGTVPGGSAPGASAAG) is disordered. Residues 484-504 (VPGGEVGGATTIGGTVPGGSA) show a composition bias toward gly residues.

The protein belongs to the MurCDEF family.

It is found in the cytoplasm. It catalyses the reaction UDP-N-acetyl-alpha-D-muramate + L-alanine + ATP = UDP-N-acetyl-alpha-D-muramoyl-L-alanine + ADP + phosphate + H(+). It functions in the pathway cell wall biogenesis; peptidoglycan biosynthesis. Its function is as follows. Cell wall formation. The sequence is that of UDP-N-acetylmuramate--L-alanine ligase from Salinispora arenicola (strain CNS-205).